Consider the following 279-residue polypeptide: Eukaryotic translation initiation factor 3 subunit G (279 aa).

Disordered stretches follow at residues 1–26 (MSTGLLDSWADAGDEFSAPPEVIANP), 66–115 (RKNW…KAHE), and 152–171 (TPSGTTPEPTSEGGAGAAGA). At Ser-78 the chain carries Phosphoserine. Basic and acidic residues predominate over residues 102–115 (KQDEKKEEEDKAHE). Residues 152–163 (TPSGTTPEPTSE) show a composition bias toward low complexity. Residues 197-276 (TTLKVSQLNS…LILHLEWSKK (80 aa)) form the RRM domain.

Belongs to the eIF-3 subunit G family. As to quaternary structure, component of the eukaryotic translation initiation factor 3 (eIF-3) complex.

It localises to the cytoplasm. Functionally, RNA-binding component of the eukaryotic translation initiation factor 3 (eIF-3) complex, which is involved in protein synthesis of a specialized repertoire of mRNAs and, together with other initiation factors, stimulates binding of mRNA and methionyl-tRNAi to the 40S ribosome. The eIF-3 complex specifically targets and initiates translation of a subset of mRNAs involved in cell proliferation. This subunit can bind 18S rRNA. This is Eukaryotic translation initiation factor 3 subunit G from Candida albicans (strain SC5314 / ATCC MYA-2876) (Yeast).